A 406-amino-acid polypeptide reads, in one-letter code: ATP-dependent RNA helicase eIF4A (406 aa).

The Q motif signature appears at 25 to 53 (DSFDAMDLKPELLRGVYAYGFERPSAIQQ). The region spanning 56–226 (ILPIIKGNDV…TKFMRDPVRI (171 aa)) is the Helicase ATP-binding domain. An ATP-binding site is contributed by 69-76 (AQSGTGKT). Residues 174–177 (DEAD) carry the DEAD box motif. A Helicase C-terminal domain is found at 237–398 (GIKQFYIAVE…EMPMNVAGKF (162 aa)).

This sequence belongs to the DEAD box helicase family. eIF4A subfamily. In terms of assembly, component of the eIF4F complex, which composition varies with external and internal environmental conditions. It is composed of at least eIF4A, eIF4E and eIF4G.

It localises to the cytoplasm. It carries out the reaction ATP + H2O = ADP + phosphate + H(+). In terms of biological role, ATP-dependent RNA helicase which is a subunit of the eIF4F complex involved in cap recognition and is required for mRNA binding to ribosome. In the current model of translation initiation, eIF4A unwinds RNA secondary structures in the 5'-UTR of mRNAs which is necessary to allow efficient binding of the small ribosomal subunit, and subsequent scanning for the initiator codon. This is ATP-dependent RNA helicase eIF4A (tif1) from Aspergillus fumigatus (strain ATCC MYA-4609 / CBS 101355 / FGSC A1100 / Af293) (Neosartorya fumigata).